Here is a 123-residue protein sequence, read N- to C-terminus: Ribosome-binding factor A (123 aa).

This sequence belongs to the RbfA family. In terms of assembly, monomer. Binds 30S ribosomal subunits, but not 50S ribosomal subunits or 70S ribosomes.

Its subcellular location is the cytoplasm. One of several proteins that assist in the late maturation steps of the functional core of the 30S ribosomal subunit. Associates with free 30S ribosomal subunits (but not with 30S subunits that are part of 70S ribosomes or polysomes). Required for efficient processing of 16S rRNA. May interact with the 5'-terminal helix region of 16S rRNA. This chain is Ribosome-binding factor A, found in Neisseria gonorrhoeae (strain NCCP11945).